Here is a 534-residue protein sequence, read N- to C-terminus: Chaperonin GroEL, chloroplastic (534 aa).

ATP contacts are provided by residues 29 to 32 (TLGP), 86 to 90 (DGTTT), G414, and D496.

Belongs to the chaperonin (HSP60) family. As to quaternary structure, forms a cylinder of 14 subunits composed of two heptameric rings stacked back-to-back. Interacts with the co-chaperonin GroES.

Its subcellular location is the plastid. It localises to the chloroplast. The enzyme catalyses ATP + H2O + a folded polypeptide = ADP + phosphate + an unfolded polypeptide.. Together with its co-chaperonin GroES, plays an essential role in assisting protein folding. The GroEL-GroES system forms a nano-cage that allows encapsulation of the non-native substrate proteins and provides a physical environment optimized to promote and accelerate protein folding. The protein is Chaperonin GroEL, chloroplastic of Galdieria sulphuraria (Red alga).